Reading from the N-terminus, the 292-residue chain is Aquaporin PIP1-3/PIP1-4 (292 aa).

A disordered region spans residues 1 to 42; the sequence is MEGKEEDVRLGANKFSERQPIGTAAQGAGAGDDDKDYKEPPP. A run of 2 helical transmembrane segments spans residues 61 to 81 and 96 to 118; these read IAEF…VMGV and IAWS…SGGH. The NPA 1 signature appears at 120–122; sequence NPA. The next 3 helical transmembrane spans lie at 139–159, 181–201, and 215–235; these read IFYI…VKGF, GDGL…VFSA, and ILAP…TIPI. The NPA 2 motif lies at 241-243; it reads NPA. A helical transmembrane segment spans residues 263–283; the sequence is IFWVGPFIGAALAAIYHQVII.

This sequence belongs to the MIP/aquaporin (TC 1.A.8) family. PIP (TC 1.A.8.11) subfamily.

It localises to the cell membrane. Its function is as follows. Aquaporins facilitate the transport of water and small neutral solutes across cell membranes. The sequence is that of Aquaporin PIP1-3/PIP1-4 (PIP1-3) from Zea mays (Maize).